Here is a 347-residue protein sequence, read N- to C-terminus: uncharacterized protein (347 aa).

An RING-type zinc finger spans residues 5–44 (CTICHNTPNRPVRLDCNHEFCYICIKGSIQNDMLNCAVCR). Residues 244–321 (NVQANFNVAR…NLDAWRQIKR (78 aa)) enclose the WWE domain.

This is an uncharacterized protein from Caenorhabditis elegans.